We begin with the raw amino-acid sequence, 465 residues long: RuvB-like helicase 2 (465 aa).

An ATP-binding site is contributed by 73 to 80 (GEPSTGKT).

It belongs to the RuvB family. Forms homohexameric rings. May form a dodecamer with pont made of two stacked hexameric rings. Component of the chromatin remodeling Ino80 complex.

It localises to the nucleus. The enzyme catalyses ATP + H2O = ADP + phosphate + H(+). Acts as a transcriptional coactivator in Wg signaling. Functionally, proposed core component of the chromatin remodeling Ino80 complex which is involved in transcriptional regulation, DNA replication and probably DNA repair. This Aedes aegypti (Yellowfever mosquito) protein is RuvB-like helicase 2.